Here is a 270-residue protein sequence, read N- to C-terminus: Aliphatic sulfonates import ATP-binding protein SsuB 1 (270 aa).

The ABC transporter domain occupies 18–232; it reads VQLRNVVRQF…DSGQAGFQLI (215 aa). Position 50–57 (50–57) interacts with ATP; the sequence is GASGSGKT. The disordered stretch occupies residues 247-270; sequence PDTAPQASAPDSTFSELRRVASAR. The segment covering 251–261 has biased composition (polar residues); the sequence is PQASAPDSTFS.

Belongs to the ABC transporter superfamily. Aliphatic sulfonates importer (TC 3.A.1.17.2) family. As to quaternary structure, the complex is composed of two ATP-binding proteins (SsuB), two transmembrane proteins (SsuC) and a solute-binding protein (SsuA).

It is found in the cell inner membrane. The enzyme catalyses ATP + H2O + aliphatic sulfonate-[sulfonate-binding protein]Side 1 = ADP + phosphate + aliphatic sulfonateSide 2 + [sulfonate-binding protein]Side 1.. Functionally, part of the ABC transporter complex SsuABC involved in aliphatic sulfonates import. Responsible for energy coupling to the transport system. The protein is Aliphatic sulfonates import ATP-binding protein SsuB 1 of Pseudomonas syringae pv. tomato (strain ATCC BAA-871 / DC3000).